We begin with the raw amino-acid sequence, 1081 residues long: DNA polymerase catalytic subunit (1081 aa).

The protein belongs to the DNA polymerase type-B family. Forms a complex with the ssDNA-binding protein UL29, the DNA polymerase processivity factor, and the alkaline exonuclease. Interacts with the putative helicase-primase complex subunit UL8; this interaction may coordinate leading and lagging strand DNA synthesis at the replication fork.

Its subcellular location is the host nucleus. The enzyme catalyses DNA(n) + a 2'-deoxyribonucleoside 5'-triphosphate = DNA(n+1) + diphosphate. It carries out the reaction Endonucleolytic cleavage to 5'-phosphomonoester.. Functionally, replicates viral genomic DNA. The replication complex is composed of six viral proteins: the DNA polymerase, processivity factor, primase, primase-associated factor, helicase, and ssDNA-binding protein. Additionally, the polymerase contains an intrinsic ribonuclease H (RNase H) activity that specifically degrades RNA/DNA heteroduplexes or duplex DNA substrates in the 5' to 3' direction. Therefore, it can catalyze the excision of the RNA primers that initiate the synthesis of Okazaki fragments at a replication fork during viral DNA replication. The polypeptide is DNA polymerase catalytic subunit (UL30) (Psittacid herpesvirus 1 (isolate Amazon parrot/-/97-0001/1997) (PsHV-1)).